The following is a 5098-amino-acid chain: Auxin transport protein BIG (5098 aa).

Ala-2 bears the N-acetylalanine mark. 2 consecutive transmembrane segments (helical) span residues Ala-1150–Leu-1170 and Leu-1458–Leu-1478. Residues Ser-1539–Ser-1549 show a composition bias toward acidic residues. Positions Ser-1539 to Glu-1562 are disordered. A UBR-type zinc finger spans residues Lys-1573 to Pro-1644. A ZZ-type zinc finger spans residues Ser-2613–Glu-2672. Positions 2618, 2621, 2633, 2636, 2642, 2645, 2658, and 2662 each coordinate Zn(2+). Residues Ser-2813 to Trp-2833 traverse the membrane as a helical segment. Positions Glu-3149 to His-3174 are disordered. The segment covering Val-3151–Val-3162 has biased composition (polar residues). The MYND-type; degenerate zinc-finger motif lies at Cys-3464–Cys-3504. Coiled-coil stretches lie at residues Lys-3537–Leu-3557 and Leu-4313–Glu-4333. The interval Pro-4569 to Asp-5098 is UBR4 E3 catalytic module. The segment at Gly-4698 to Ala-4817 adopts a HemiRING-type zinc-finger fold. Residues Cys-4701, Cys-4704, His-4751, and Cys-4754 each coordinate Zn(2+). The region spanning Ser-4820–Asp-5098 is the UZI domain. A compositionally biased stretch (low complexity) spans Ser-4891 to Ser-4903. The interval Ser-4891–Thr-4915 is disordered.

The protein belongs to the UBR4 family. As to expression, constitutively expressed in roots, rosette leaves, inflorescence stems, and flowers. Present in inflorescence meristems, floral meristems and vascular tissues.

The protein localises to the membrane. Required for auxin efflux and polar auxin transport (PAT) influencing auxin-mediated developmental responses (e.g. cell elongation, apical dominance, lateral root production, inflorescence architecture, general growth and development). Controls the elongation of the pedicels and stem internodes through auxin action. Involved in the expression modulation of light-regulated genes. Represses CAB1 and CAB3 genes expression in etiolated seedlings. Confers sensitivity to the auxin transport inhibitors N-1-naphthylphthalamic acid (NPA), 2-carboxyphenyl-3-phenylpropane-l,2-dione (CPD), and methyl-2-chloro-9-hydroxyfluorene-9-carboxylate (CFM). Influences the polarized subcellular distribution of the auxin transporter PIN1 in response to auxin transport inhibitors. Plays a role in the regulation of responses to phytohormones such as auxin, cytokinins, ethylene and gibberellic acid (GA), particularly during light-mediated stimuli (e.g. shade ovoidance, etiolation). Required for pericycle cell activation to form lateral root primordia (LRP) in both high and low phosphate P conditions. Necessary for the plant-growth promotion and lateral root development mediated by the fungus Trichoderma virens. The sequence is that of Auxin transport protein BIG (BIG) from Arabidopsis thaliana (Mouse-ear cress).